We begin with the raw amino-acid sequence, 290 residues long: Elongation factor Ts (290 aa).

The tract at residues 82 to 85 is involved in Mg(2+) ion dislocation from EF-Tu; sequence TDFV.

The protein belongs to the EF-Ts family.

The protein resides in the cytoplasm. Its function is as follows. Associates with the EF-Tu.GDP complex and induces the exchange of GDP to GTP. It remains bound to the aminoacyl-tRNA.EF-Tu.GTP complex up to the GTP hydrolysis stage on the ribosome. The protein is Elongation factor Ts of Cellvibrio japonicus (strain Ueda107) (Pseudomonas fluorescens subsp. cellulosa).